Consider the following 298-residue polypeptide: MMPIPANPTNASIQPRSLYDAWADLAWRAMLTEVNLSPKPGLVDRLNCGAHKDMALADFHRSAEAIRHWLPRFMEYGASCTRLPPESVLAGLRPLGMACEAAMFRATAGVNTHKGSIFSLGLLCAAIGRLYQLRQPIAAETLCATAADFCRGLTTRELRQNNLLLTAGQRLYQQQGLTGARGEAEAGYPLVIRHALPHYRALLAQGRDPDLALLDTLLLLMSLNGDTNVASRGGADGLRWLQQHAAFLLHQGGIRTPDDLVYLHRFDQQCIERNLSPGGSADLLIVTWFLAQISQVNH.

It belongs to the CitG/MdcB family.

The catalysed reaction is 3'-dephospho-CoA + ATP = 2'-(5''-triphospho-alpha-D-ribosyl)-3'-dephospho-CoA + adenine. The polypeptide is Probable 2-(5''-triphosphoribosyl)-3'-dephosphocoenzyme-A synthase 2 (Salmonella paratyphi A (strain ATCC 9150 / SARB42)).